A 1030-amino-acid chain; its full sequence is Peroxisomal ATPase PEX6 (1030 aa).

The segment at 478–683 is AAA-cassette D1; the sequence is VLLHSTTNNV…VETARMTATA (206 aa). Positions 767–956 are AAA-cassette D2; the sequence is GILFYGPPGT…CSDAMLNAMS (190 aa). 772-779 contributes to the ATP binding site; that stretch reads GPPGTGKT.

The protein belongs to the AAA ATPase family. As to quaternary structure, interacts with PEX1; forming the PEX1-PEX6 AAA ATPase complex, which is composed of a heterohexamer formed by a trimer of PEX1-PEX6 dimers. Interacts with PEX15; anchors PEX1-PEX6 heterooligomers to the peroxisomal membrane and mediates their association with the peroxisomal importomer. Interacts with UBP15.

It localises to the cytoplasm. It is found in the cytosol. The protein localises to the peroxisome membrane. It catalyses the reaction ATP + H2O = ADP + phosphate + H(+). Functionally, component of the PEX1-PEX6 AAA ATPase complex, a protein dislocase complex that mediates the ATP-dependent extraction of the PEX5 receptor from peroxisomal membranes, an essential step for PEX5 recycling. Specifically recognizes PEX5 monoubiquitinated at 'Cys-6', and pulls it out of the peroxisome lumen through the PEX2-PEX10-PEX12 retrotranslocation channel. Extraction by the PEX1-PEX6 AAA ATPase complex is accompanied by unfolding of the TPR repeats and release of bound cargo from PEX5. This Saccharomyces cerevisiae (strain ATCC 204508 / S288c) (Baker's yeast) protein is Peroxisomal ATPase PEX6.